The primary structure comprises 76 residues: Serine proteinase inhibitor IA-1 (76 aa).

Ser-1 carries the post-translational modification N-acetylserine.

Belongs to the protease inhibitor I9 family.

Specifically inhibits an endogenous intracellular serine proteinase (proteinase A). The protein is Serine proteinase inhibitor IA-1 of Pleurotus ostreatus (Oyster mushroom).